The primary structure comprises 419 residues: Synaptosomal-associated protein 47 (419 aa).

2 consecutive t-SNARE coiled-coil homology domains span residues 108 to 170 (PQGA…LSEL) and 356 to 418 (VLQP…MRKL).

The protein belongs to the SVAP1 family.

May play a role in intracellular membrane fusion. The sequence is that of Synaptosomal-associated protein 47 (snap47) from Danio rerio (Zebrafish).